The chain runs to 205 residues: Large ribosomal subunit protein uL13 (205 aa).

The protein belongs to the universal ribosomal protein uL13 family.

The protein is Large ribosomal subunit protein uL13 (RpL13A) of Drosophila melanogaster (Fruit fly).